Here is a 969-residue protein sequence, read N- to C-terminus: Isoleucine--tRNA ligase (969 aa).

The 'HIGH' region motif lies at 68–78 (PYANGNLHMGH). Position 584 (glutamate 584) interacts with L-isoleucyl-5'-AMP. A 'KMSKS' region motif is present at residues 625–629 (KMSKS). Lysine 628 provides a ligand contact to ATP. Residues cysteine 938, cysteine 941, cysteine 958, and cysteine 961 each coordinate Zn(2+).

This sequence belongs to the class-I aminoacyl-tRNA synthetase family. IleS type 1 subfamily. Monomer. The cofactor is Zn(2+).

The protein localises to the cytoplasm. The enzyme catalyses tRNA(Ile) + L-isoleucine + ATP = L-isoleucyl-tRNA(Ile) + AMP + diphosphate. In terms of biological role, catalyzes the attachment of isoleucine to tRNA(Ile). As IleRS can inadvertently accommodate and process structurally similar amino acids such as valine, to avoid such errors it has two additional distinct tRNA(Ile)-dependent editing activities. One activity is designated as 'pretransfer' editing and involves the hydrolysis of activated Val-AMP. The other activity is designated 'posttransfer' editing and involves deacylation of mischarged Val-tRNA(Ile). The sequence is that of Isoleucine--tRNA ligase from Prochlorococcus marinus (strain SARG / CCMP1375 / SS120).